The chain runs to 131 residues: Small ribosomal subunit protein uS8 (131 aa).

Belongs to the universal ribosomal protein uS8 family. As to quaternary structure, part of the 30S ribosomal subunit. Contacts proteins S5 and S12.

One of the primary rRNA binding proteins, it binds directly to 16S rRNA central domain where it helps coordinate assembly of the platform of the 30S subunit. The chain is Small ribosomal subunit protein uS8 from Acidovorax sp. (strain JS42).